A 306-amino-acid polypeptide reads, in one-letter code: Leucine-rich repeat-containing protein 59 (306 aa).

M1 carries the N-acetylmethionine modification. T2 bears the N-acetylthreonine; in Leucine-rich repeat-containing protein 59, N-terminally processed mark. Residues 2-244 (TKAGSKGGNL…KPPPRKHTRS (243 aa)) are Cytoplasmic-facing. 5 LRR repeats span residues 10 to 31 (NLRDKLDGNELDLSLSDLNEVP), 40 to 62 (KATVLDLSCNKLTTLPSDFCGLT), 63 to 84 (HLVKLDLSKNKLRQLPADFGRL), 86 to 107 (NLQHLDLLNNRLVTLPVSFAQL), and 109 to 128 (SLKWLDLKDNPLDPVLAKVA). 2 positions are modified to phosphoserine: S23 and S25. At K73 the chain carries N6-succinyllysine. The residue at position 135 (K135) is an N6-acetyllysine. Residues 152-216 (QADQERERQR…KAAKREQEKK (65 aa)) are a coiled coil. Basic and acidic residues predominate over residues 175-221 (AKQRAKEAQERELRKREKAEEKERRRKEYDALKAAKREQEKKPKKET). The tract at residues 175 to 241 (AKQRAKEAQE…RPRKPPPRKH (67 aa)) is disordered. The span at 229–241 (SSSRPRKPPPRKH) shows a compositional bias: basic residues. The helical transmembrane segment at 245–265 (WAVLKLLLLLLLCVAGGLVAC) threads the bilayer. Over 266-306 (RVTELQQQPLCTSVNTIYDNAVRGLRSHDILQWVLQTDSQQ) the chain is Lumenal.

In terms of assembly, can form homodimers. Interacts with SGO1. Interacts with FGF1.

Its subcellular location is the microsome membrane. It is found in the endoplasmic reticulum membrane. It localises to the nucleus envelope. Required for nuclear import of FGF1, but not that of FGF2. Might regulate nuclear import of exogenous FGF1 by facilitating interaction with the nuclear import machinery and by transporting cytosolic FGF1 to, and possibly through, the nuclear pores. The chain is Leucine-rich repeat-containing protein 59 (LRRC59) from Bos taurus (Bovine).